The following is a 205-amino-acid chain: Dephospho-CoA kinase (205 aa).

The DPCK domain occupies 6 to 205; sequence RIGLTGGIAA…EIYAGWCAGR (200 aa). 14 to 19 contributes to the ATP binding site; that stretch reads AAGKST.

The protein belongs to the CoaE family.

It is found in the cytoplasm. The enzyme catalyses 3'-dephospho-CoA + ATP = ADP + CoA + H(+). Its pathway is cofactor biosynthesis; coenzyme A biosynthesis; CoA from (R)-pantothenate: step 5/5. Functionally, catalyzes the phosphorylation of the 3'-hydroxyl group of dephosphocoenzyme A to form coenzyme A. The protein is Dephospho-CoA kinase of Bifidobacterium longum (strain NCC 2705).